A 258-amino-acid polypeptide reads, in one-letter code: Small ribosomal subunit protein uS2 (258 aa).

The protein belongs to the universal ribosomal protein uS2 family.

The protein is Small ribosomal subunit protein uS2 of Leuconostoc mesenteroides subsp. mesenteroides (strain ATCC 8293 / DSM 20343 / BCRC 11652 / CCM 1803 / JCM 6124 / NCDO 523 / NBRC 100496 / NCIMB 8023 / NCTC 12954 / NRRL B-1118 / 37Y).